A 435-amino-acid chain; its full sequence is Elongation factor 1-alpha (435 aa).

The tr-type G domain maps to 4–229 (KPHLNLIVIG…DQLEIPPKPV (226 aa)). Residues 13–20 (GHVDHGKS) form a G1 region. 13–20 (GHVDHGKS) is a binding site for GTP. Serine 20 provides a ligand contact to Mg(2+). Positions 69–73 (GVTIN) are G2. The interval 90 to 93 (DAPG) is G3. GTP-binding positions include 90–94 (DAPGH) and 152–155 (NKMD). Positions 152-155 (NKMD) are G4. The interval 193-195 (VAP) is G5.

It belongs to the TRAFAC class translation factor GTPase superfamily. Classic translation factor GTPase family. EF-Tu/EF-1A subfamily.

Its subcellular location is the cytoplasm. The enzyme catalyses GTP + H2O = GDP + phosphate + H(+). Its function is as follows. GTP hydrolase that promotes the GTP-dependent binding of aminoacyl-tRNA to the A-site of ribosomes during protein biosynthesis. The chain is Elongation factor 1-alpha from Sulfolobus acidocaldarius (strain ATCC 33909 / DSM 639 / JCM 8929 / NBRC 15157 / NCIMB 11770).